Reading from the N-terminus, the 2479-residue chain is Centrosomal protein of 290 kDa (2479 aa).

The self-association (with itself or C-terminus) stretch occupies residues 1–695; that stretch reads MPPNINWKEI…IESKNAEGIF (695 aa). 7 coiled-coil regions span residues 59–565, 598–664, 697–931, 958–1027, 1071–1498, 1533–1584, and 1635–2452; these read MKMK…ERGK, SLKN…MQKD, ASLH…VCEK, SLSE…IEQA, QRAE…ILSR, HTLK…LHIL, and DSLS…SEQL. Basic and acidic residues predominate over residues 149 to 163; sequence ALRNEEAENENSKLR. The interval 149–168 is disordered; it reads ALRNEEAENENSKLRRENKR. An interaction with IQCB1 region spans residues 696 to 896; the sequence is DASLHLKAQV…TVLQVNEKSL (201 aa). The tract at residues 1966 to 2479 is self-association (with itself or N-terminus); that stretch reads TTGMTVDQVL…EESPVNFPIY (514 aa). The disordered stretch occupies residues 2458-2479; that stretch reads SPVAASEEFEDEEESPVNFPIY.

Part of the tectonic-like complex (also named B9 complex). Interacts with ATF4 via its N-terminal region. Associates with the BBSome complex, interacting (via N-terminus) with BBS4. Interacts with IQCB1/NPHP5; IQCB1 and CEP290/NPHP6 are proposed to form a functional NPHP5-6 module localized to the centrosome. Interacts with NPHP4; the interaction likely requires additional interactors. Interacts with ZNF423, FAM161A, CEP162, CEP162, CEP131, TALPID3, CCDC13, CC2D2A, RPGRIP1. Can self-associate (homo- or heteromeric). Interacts with CCP110; required for suppressing cilia formation. Interacts with RPGR. Associates (via C-terminus) with microtubules; association to microtubule is reduced in response to cellular stress, such as ultraviolet light (UV) radiation or heat shock, in a process that requires p38 MAP kinase signaling. Interacts with FAM161A. Interacts with PCM1. Interacts with CCDC66. Interacts with ARMC9 and CSPP1. Ubiquitinated. May undergo monoubiquitination; monoubiquitination is inhibited in response to cellular stress, such as ultraviolet light (UV) radiation or heat shock, but does not cause its displacement from centriolar satellites. Ubiquitous. Expressed strongly in placenta and weakly in brain.

It localises to the cytoplasm. Its subcellular location is the cytoskeleton. It is found in the microtubule organizing center. The protein resides in the centrosome. The protein localises to the centriolar satellite. It localises to the nucleus. Its subcellular location is the cell projection. It is found in the cilium. The protein resides in the cilium basal body. The protein localises to the centriole. It localises to the cytoplasmic vesicle. Functionally, involved in early and late steps in cilia formation. Its association with CCP110 is required for inhibition of primary cilia formation by CCP110. May play a role in early ciliogenesis in the disappearance of centriolar satellites and in the transition of primary ciliar vesicles (PCVs) to capped ciliary vesicles (CCVs). Required for the centrosomal recruitment of RAB8A and for the targeting of centriole satellite proteins to centrosomes such as of PCM1. Required for the correct localization of ciliary and phototransduction proteins in retinal photoreceptor cells; may play a role in ciliary transport processes. Required for efficient recruitment of RAB8A to primary cilium. In the ciliary transition zone is part of the tectonic-like complex which is required for tissue-specific ciliogenesis and may regulate ciliary membrane composition. Involved in regulation of the BBSome complex integrity, specifically for presence of BBS2, BBS5 and BBS8/TTC8 in the complex, and in ciliary targeting of selected BBSome cargos. May play a role in controlling entry of the BBSome complex to cilia possibly implicating IQCB1/NPHP5. Activates ATF4-mediated transcription. The protein is Centrosomal protein of 290 kDa (CEP290) of Homo sapiens (Human).